Here is a 464-residue protein sequence, read N- to C-terminus: Mothers against decapentaplegic homolog 5 (464 aa).

In terms of domain architecture, MH1 spans 13 to 137; it reads PAVKRLLGWK…YKRVESPVLP (125 aa). Residues Cys65, Cys110, Cys122, and His127 each contribute to the Zn(2+) site. Residues 166 to 258 are disordered; sequence HMPLNATFPE…LAPQNMPRGD (93 aa). Polar residues predominate over residues 173 to 183; it reads FPESFQQHSGG. Residues 199–216 show a composition bias toward low complexity; that stretch reads ASSGTYPNSPASSGPSSP. A compositionally biased stretch (polar residues) spans 237 to 251; it reads QDGSQSMETGSSLAP. In terms of domain architecture, MH2 spans 270–464; sequence WCSIVYYELN…SPLNPISSVS (195 aa).

It belongs to the dwarfin/SMAD family. In terms of assembly, may form trimers with the co-SMAD SMAD4.

The protein localises to the cytoplasm. It is found in the nucleus. In terms of biological role, involved in ventralization. May mediate Bmp2b signaling during early phases of embryonic dorsal-ventral pattern formation. Required for initiation of Smad1 expression during gastrulation. This chain is Mothers against decapentaplegic homolog 5 (smad5), found in Danio rerio (Zebrafish).